An 89-amino-acid chain; its full sequence is Large ribosomal subunit protein bL28 (89 aa).

It belongs to the bacterial ribosomal protein bL28 family.

The protein is Large ribosomal subunit protein bL28 of Chlamydia trachomatis serovar L2 (strain ATCC VR-902B / DSM 19102 / 434/Bu).